A 101-amino-acid polypeptide reads, in one-letter code: Large ribosomal subunit protein bL28 (101 aa).

This sequence belongs to the bacterial ribosomal protein bL28 family.

The polypeptide is Large ribosomal subunit protein bL28 (Rhodopseudomonas palustris (strain BisB18)).